A 140-amino-acid chain; its full sequence is NADPH-dependent 7-cyano-7-deazaguanine reductase (140 aa).

The Thioimide intermediate role is filled by Cys-51. Asp-58 (proton donor) is an active-site residue. Residues Leu-73–Ser-75 and His-92–Glu-93 each bind substrate.

This sequence belongs to the GTP cyclohydrolase I family. QueF type 1 subfamily.

The protein resides in the cytoplasm. The enzyme catalyses 7-aminomethyl-7-carbaguanine + 2 NADP(+) = 7-cyano-7-deazaguanine + 2 NADPH + 3 H(+). It participates in tRNA modification; tRNA-queuosine biosynthesis. Its function is as follows. Catalyzes the NADPH-dependent reduction of 7-cyano-7-deazaguanine (preQ0) to 7-aminomethyl-7-deazaguanine (preQ1). This chain is NADPH-dependent 7-cyano-7-deazaguanine reductase, found in Syntrophus aciditrophicus (strain SB).